The chain runs to 264 residues: 3-methyl-2-oxobutanoate hydroxymethyltransferase (264 aa).

Mg(2+) contacts are provided by Asp45 and Asp84. 3-methyl-2-oxobutanoate contacts are provided by residues 45–46 (DS), Asp84, and Lys112. Position 114 (Glu114) interacts with Mg(2+). The Proton acceptor role is filled by Glu181.

This sequence belongs to the PanB family. In terms of assembly, homodecamer; pentamer of dimers. Mg(2+) serves as cofactor.

It localises to the cytoplasm. It carries out the reaction 3-methyl-2-oxobutanoate + (6R)-5,10-methylene-5,6,7,8-tetrahydrofolate + H2O = 2-dehydropantoate + (6S)-5,6,7,8-tetrahydrofolate. Its pathway is cofactor biosynthesis; (R)-pantothenate biosynthesis; (R)-pantoate from 3-methyl-2-oxobutanoate: step 1/2. Catalyzes the reversible reaction in which hydroxymethyl group from 5,10-methylenetetrahydrofolate is transferred onto alpha-ketoisovalerate to form ketopantoate. This Shewanella loihica (strain ATCC BAA-1088 / PV-4) protein is 3-methyl-2-oxobutanoate hydroxymethyltransferase.